The primary structure comprises 615 residues: Ectoine/glycine betaine/proline transporter EctP (615 aa).

12 consecutive transmembrane segments (helical) span residues 24–44 (FIFS…IALG), 62–82 (LGWM…GIFA), 102–122 (IVWF…FWGV), 156–176 (FGIH…YFIY), 207–227 (LAIV…VLQI), 240–260 (VSWV…ISVA), 275–295 (IAMA…LTLL), 329–349 (WTVF…MFVA), 360–380 (FIGG…SIFG), 417–437 (LTGI…ITSI), 463–483 (WACT…SSGI), and 489–509 (VVII…FSLL). Disordered stretches follow at residues 524–562 (TRQW…LEHD) and 589–615 (PEEA…EYDI). Basic and acidic residues-rich tracts occupy residues 526–540 (QWEK…EEHS) and 600–615 (KIVE…EYDI).

This sequence belongs to the BCCT transporter (TC 2.A.15) family.

The protein resides in the cell membrane. Involved in the uptake of osmoprotectants. Can transport ectoine, proline and glycine betaine. Na(+) is probably the coupling ion. The chain is Ectoine/glycine betaine/proline transporter EctP from Corynebacterium glutamicum (strain ATCC 13032 / DSM 20300 / JCM 1318 / BCRC 11384 / CCUG 27702 / LMG 3730 / NBRC 12168 / NCIMB 10025 / NRRL B-2784 / 534).